The following is a 105-amino-acid chain: Heat shock protein HspQ (105 aa).

The disordered stretch occupies residues 76–105; it reads EMRDEHPEQPSMDELARTIRKQLQAPRLRN.

This sequence belongs to the HspQ family.

Its subcellular location is the cytoplasm. In terms of biological role, involved in the degradation of certain denaturated proteins, including DnaA, during heat shock stress. In Salmonella agona (strain SL483), this protein is Heat shock protein HspQ.